The primary structure comprises 542 residues: MTKYIFVTGGVLSSLGKGITAASIGTLLKHSGIQVGMLKIDPYINVDPGTMSPLEHGEVFVTKDGAETDLDIGNYERFLDTSYLKSSNFTTGQVYSAVIERERAGGYLGQTIQVIPHIVGEIVKRIKEAGEGHDILIVELGGTVGDIEGLPFMEAIRQMKHDDEVEGTFFVHVTLIPFIKAAGELKSKPTQHSVQELRRIGITPQMIIARSENALPKTFKKKLAMSCDVSSDSVIEALDAASIYDVPISFLRQNILKPISKELSLGELNPNMEKWDSLVKKIVQPQNRIVLGFVGKYLELKEAYKSLTEALIHAGAHLDTRVDIHWVDSEKIEERGAEALLGDCDSVLVAGGFGNRGVEGKIKAIEYARVNKIPYLGICLGMQLTLVEYARNVLGYEGANSIEFDENTPYPMIYLIDNFLDQSGNTQLRTHKSPMGGTLRLGEYPCDTLEGSIIRKAYHGEKTIHERHRHRYEANPTYRKALEDAGMIVTGESNGLIEAVEIKDHPWFLGVQFHPEFTSRLQTPNPSILAFVEATLAISQEE.

The tract at residues 1 to 265 (MTKYIFVTGG…LKPISKELSL (265 aa)) is amidoligase domain. Residue Ser-13 participates in CTP binding. Residue Ser-13 participates in UTP binding. ATP contacts are provided by residues 14–19 (SLGKGI) and Asp-71. Mg(2+) is bound by residues Asp-71 and Glu-139. CTP-binding positions include 146–148 (DIE), 186–191 (KSKPTQ), and Lys-222. UTP contacts are provided by residues 186–191 (KSKPTQ) and Lys-222. The Glutamine amidotransferase type-1 domain occupies 290–541 (VLGFVGKYLE…VEATLAISQE (252 aa)). Gly-352 provides a ligand contact to L-glutamine. Cys-379 acts as the Nucleophile; for glutamine hydrolysis in catalysis. L-glutamine-binding positions include 380-383 (LGMQ), Glu-403, and Arg-471. Residues His-514 and Glu-516 contribute to the active site.

It belongs to the CTP synthase family. In terms of assembly, homotetramer.

The enzyme catalyses UTP + L-glutamine + ATP + H2O = CTP + L-glutamate + ADP + phosphate + 2 H(+). It carries out the reaction L-glutamine + H2O = L-glutamate + NH4(+). The catalysed reaction is UTP + NH4(+) + ATP = CTP + ADP + phosphate + 2 H(+). Its pathway is pyrimidine metabolism; CTP biosynthesis via de novo pathway; CTP from UDP: step 2/2. Allosterically activated by GTP, when glutamine is the substrate; GTP has no effect on the reaction when ammonia is the substrate. The allosteric effector GTP functions by stabilizing the protein conformation that binds the tetrahedral intermediate(s) formed during glutamine hydrolysis. Inhibited by the product CTP, via allosteric rather than competitive inhibition. Catalyzes the ATP-dependent amination of UTP to CTP with either L-glutamine or ammonia as the source of nitrogen. Regulates intracellular CTP levels through interactions with the four ribonucleotide triphosphates. The polypeptide is CTP synthase (Sulfurimonas denitrificans (strain ATCC 33889 / DSM 1251) (Thiomicrospira denitrificans (strain ATCC 33889 / DSM 1251))).